A 110-amino-acid polypeptide reads, in one-letter code: Inner membrane protein H108R (110 aa).

Residues 10–32 (LIVIITILITTRELSTTMLIVSL) form a helical membrane-spanning segment.

It belongs to the asfivirus H108R family.

It localises to the virion membrane. This is Inner membrane protein H108R from African swine fever virus (isolate Pig/Kenya/KEN-50/1950) (ASFV).